The primary structure comprises 441 residues: GTPase Der (441 aa).

EngA-type G domains lie at 2-164 (QKVA…PADE) and 173-343 (IRIS…EKWQ). Residues 8-15 (GRPNVGKS), 55-59 (DTGGL), 116-119 (NKID), 179-186 (GRPNVGKS), 226-230 (DTAGI), and 288-291 (NKWD) each bind GTP. Residues 344 to 428 (SRIPTAELNR…PVRLKWKEKG (85 aa)) enclose the KH-like domain.

Belongs to the TRAFAC class TrmE-Era-EngA-EngB-Septin-like GTPase superfamily. EngA (Der) GTPase family. In terms of assembly, associates with the 50S ribosomal subunit.

GTPase that plays an essential role in the late steps of ribosome biogenesis. This Deinococcus geothermalis (strain DSM 11300 / CIP 105573 / AG-3a) protein is GTPase Der.